Consider the following 426-residue polypeptide: 3-phosphoshikimate 1-carboxyvinyltransferase (426 aa).

3 residues coordinate 3-phosphoshikimate: lysine 20, serine 21, and arginine 25. Lysine 20 provides a ligand contact to phosphoenolpyruvate. Residues glycine 92 and arginine 120 each coordinate phosphoenolpyruvate. Positions 165, 167, 313, and 340 each coordinate 3-phosphoshikimate. Glutamine 167 is a phosphoenolpyruvate binding site. Aspartate 313 acts as the Proton acceptor in catalysis. Positions 344 and 386 each coordinate phosphoenolpyruvate.

This sequence belongs to the EPSP synthase family. As to quaternary structure, monomer.

It localises to the cytoplasm. The enzyme catalyses 3-phosphoshikimate + phosphoenolpyruvate = 5-O-(1-carboxyvinyl)-3-phosphoshikimate + phosphate. It functions in the pathway metabolic intermediate biosynthesis; chorismate biosynthesis; chorismate from D-erythrose 4-phosphate and phosphoenolpyruvate: step 6/7. Catalyzes the transfer of the enolpyruvyl moiety of phosphoenolpyruvate (PEP) to the 5-hydroxyl of shikimate-3-phosphate (S3P) to produce enolpyruvyl shikimate-3-phosphate and inorganic phosphate. In Brevibacillus brevis (strain 47 / JCM 6285 / NBRC 100599), this protein is 3-phosphoshikimate 1-carboxyvinyltransferase.